Here is a 120-residue protein sequence, read N- to C-terminus: UPF0231 protein YacL (120 aa).

This sequence belongs to the UPF0231 family.

The polypeptide is UPF0231 protein YacL (Salmonella typhi).